The chain runs to 444 residues: Trigger factor (444 aa).

Residues 160–245 (DMQVTFDFEG…VKQVEKPKLP (86 aa)) enclose the PPIase FKBP-type domain.

The protein belongs to the FKBP-type PPIase family. Tig subfamily.

The protein localises to the cytoplasm. It catalyses the reaction [protein]-peptidylproline (omega=180) = [protein]-peptidylproline (omega=0). In terms of biological role, involved in protein export. Acts as a chaperone by maintaining the newly synthesized protein in an open conformation. Functions as a peptidyl-prolyl cis-trans isomerase. The protein is Trigger factor of Acinetobacter baylyi (strain ATCC 33305 / BD413 / ADP1).